Consider the following 736-residue polypeptide: Catalase-peroxidase (736 aa).

Residues 96-224 (WHSAGTYRTG…LAAVQMGLIY (129 aa)) constitute a cross-link (tryptophyl-tyrosyl-methioninium (Trp-Tyr) (with M-250)). H97 functions as the Proton acceptor in the catalytic mechanism. The segment at residues 224-250 (YVNPEGPDGNPDPVASGRDVRETFGRM) is a cross-link (tryptophyl-tyrosyl-methioninium (Tyr-Met) (with W-96)). Position 265 (H265) interacts with heme b.

Belongs to the peroxidase family. Peroxidase/catalase subfamily. Homodimer or homotetramer. The cofactor is heme b. In terms of processing, formation of the three residue Trp-Tyr-Met cross-link is important for the catalase, but not the peroxidase activity of the enzyme.

The catalysed reaction is H2O2 + AH2 = A + 2 H2O. It carries out the reaction 2 H2O2 = O2 + 2 H2O. Functionally, bifunctional enzyme with both catalase and broad-spectrum peroxidase activity. The sequence is that of Catalase-peroxidase from Pelobacter propionicus (strain DSM 2379 / NBRC 103807 / OttBd1).